The primary structure comprises 164 residues: Peptidyl-prolyl cis-trans isomerase A-like 4G (164 aa).

Residues 7–163 enclose the PPIase cyclophilin-type domain; the sequence is FFDITVDGKP…KKITIADCGQ (157 aa).

Belongs to the cyclophilin-type PPIase family. PPIase A subfamily.

It localises to the cytoplasm. The enzyme catalyses [protein]-peptidylproline (omega=180) = [protein]-peptidylproline (omega=0). Its function is as follows. PPIases accelerate the folding of proteins. It catalyzes the cis-trans isomerization of proline imidic peptide bonds in oligopeptides. The sequence is that of Peptidyl-prolyl cis-trans isomerase A-like 4G (PPIAL4G) from Homo sapiens (Human).